The sequence spans 563 residues: Lipoprotein LpqB (563 aa).

Residues 1 to 19 (MRRMKALTAAMTAALLVSG) form the signal peptide. Residue Cys-20 is the site of N-palmitoyl cysteine attachment. Cys-20 is lipidated: S-diacylglycerol cysteine.

The protein belongs to the LpqB lipoprotein family.

It localises to the cell membrane. This Corynebacterium efficiens (strain DSM 44549 / YS-314 / AJ 12310 / JCM 11189 / NBRC 100395) protein is Lipoprotein LpqB.